A 570-amino-acid chain; its full sequence is Endo-1,4-beta-xylanase 4 (570 aa).

Positions 1–24 (MKRFNYGFFHLVLFLISLLLLGSG) are cleaved as a signal peptide. N-linked (GlcNAc...) asparagine glycosylation is found at Asn92, Asn190, and Asn300. In terms of domain architecture, GH10 spans 195–494 (EGSVISIEQI…TQAGDLIDKL (300 aa)). Glu325 functions as the Proton donor in the catalytic mechanism. Residue Asn339 is glycosylated (N-linked (GlcNAc...) asparagine). Residue Glu432 is the Nucleophile of the active site. Asn545 is a glycosylation site (N-linked (GlcNAc...) asparagine).

The protein belongs to the glycosyl hydrolase 10 (cellulase F) family.

It carries out the reaction Endohydrolysis of (1-&gt;4)-beta-D-xylosidic linkages in xylans.. The protein operates within glycan degradation; xylan degradation. Binds to and hydrolyzes insoluble and soluble xylan substrates. The protein is Endo-1,4-beta-xylanase 4 of Arabidopsis thaliana (Mouse-ear cress).